Reading from the N-terminus, the 145-residue chain is Sporulation-specific cell division protein Francci3_3418 (145 aa).

It belongs to the SsgA family.

The protein resides in the cell septum. Functionally, involved in sporulation-specific cell division. The chain is Sporulation-specific cell division protein Francci3_3418 from Frankia casuarinae (strain DSM 45818 / CECT 9043 / HFP020203 / CcI3).